The sequence spans 365 residues: tRNA N6-adenosine threonylcarbamoyltransferase (365 aa).

Residues His-119 and His-123 each contribute to the Fe cation site. Substrate contacts are provided by residues 141–145 (LVSGG), Asp-174, Gly-187, and Asn-288. Asp-316 contributes to the Fe cation binding site.

Belongs to the KAE1 / TsaD family. Fe(2+) serves as cofactor.

The protein localises to the cytoplasm. It catalyses the reaction L-threonylcarbamoyladenylate + adenosine(37) in tRNA = N(6)-L-threonylcarbamoyladenosine(37) in tRNA + AMP + H(+). Its function is as follows. Required for the formation of a threonylcarbamoyl group on adenosine at position 37 (t(6)A37) in tRNAs that read codons beginning with adenine. Is involved in the transfer of the threonylcarbamoyl moiety of threonylcarbamoyl-AMP (TC-AMP) to the N6 group of A37, together with TsaE and TsaB. TsaD likely plays a direct catalytic role in this reaction. This chain is tRNA N6-adenosine threonylcarbamoyltransferase, found in Rhizobium etli (strain ATCC 51251 / DSM 11541 / JCM 21823 / NBRC 15573 / CFN 42).